We begin with the raw amino-acid sequence, 331 residues long: MEIENHTLITKFLILGLSDDPELQPILFGLFLSMYLVTLLGNLLIILAVSSDSHLHKPMYFLLSNLSFIDICFISTTIPKMLVNMQSQIKDISYIECLTQVFFFNIFAGMDNFLLTLMAYDRFVAICHPLNYTVIMNPRLCALLILMFWIIMFWVSLIHVLLMNELNFSRGTEIPHFFCELAQVLKVSNSDNHVNNVFMYVVTSLLGVIPMTGILMSYSQIFSSLFRMSSTVSKYKAFSTCGSHLCVVTLFYGSGFGVYFSSSVVHSTQRRKVASLMYTVISPMLNPFIYTLRNKDVKGALGKLFNRVASSPSCINDIRNKLLLRSVRQIL.

The Extracellular portion of the chain corresponds to 1–25 (MEIENHTLITKFLILGLSDDPELQP). N5 carries N-linked (GlcNAc...) asparagine glycosylation. A helical transmembrane segment spans residues 26–46 (ILFGLFLSMYLVTLLGNLLII). Residues 47–57 (LAVSSDSHLHK) are Cytoplasmic-facing. Residues 58 to 78 (PMYFLLSNLSFIDICFISTTI) form a helical membrane-spanning segment. The Extracellular segment spans residues 79-97 (PKMLVNMQSQIKDISYIEC). Residues C97 and C179 are joined by a disulfide bond. The chain crosses the membrane as a helical span at residues 98 to 118 (LTQVFFFNIFAGMDNFLLTLM). Residues 119–142 (AYDRFVAICHPLNYTVIMNPRLCA) are Cytoplasmic-facing. Residues 143-163 (LLILMFWIIMFWVSLIHVLLM) form a helical membrane-spanning segment. Residues 164-196 (NELNFSRGTEIPHFFCELAQVLKVSNSDNHVNN) lie on the Extracellular side of the membrane. N-linked (GlcNAc...) asparagine glycosylation occurs at N167. The chain crosses the membrane as a helical span at residues 197–217 (VFMYVVTSLLGVIPMTGILMS). The Cytoplasmic portion of the chain corresponds to 218–244 (YSQIFSSLFRMSSTVSKYKAFSTCGSH). The chain crosses the membrane as a helical span at residues 245-265 (LCVVTLFYGSGFGVYFSSSVV). At 266-271 (HSTQRR) the chain is on the extracellular side. The helical transmembrane segment at 272–292 (KVASLMYTVISPMLNPFIYTL) threads the bilayer. Residues 293-331 (RNKDVKGALGKLFNRVASSPSCINDIRNKLLLRSVRQIL) lie on the Cytoplasmic side of the membrane.

This sequence belongs to the G-protein coupled receptor 1 family.

The protein resides in the cell membrane. Its function is as follows. Possible olfactory or taste receptor. This is Olfactory receptor 7D11 from Mus musculus (Mouse).